A 61-amino-acid polypeptide reads, in one-letter code: Small ribosomal subunit protein uS14 (61 aa).

Zn(2+) is bound by residues C24, C27, C40, and C43.

This sequence belongs to the universal ribosomal protein uS14 family. Zinc-binding uS14 subfamily. Part of the 30S ribosomal subunit. Contacts proteins S3 and S10. Requires Zn(2+) as cofactor.

Functionally, binds 16S rRNA, required for the assembly of 30S particles and may also be responsible for determining the conformation of the 16S rRNA at the A site. The sequence is that of Small ribosomal subunit protein uS14 from Acidothermus cellulolyticus (strain ATCC 43068 / DSM 8971 / 11B).